Consider the following 83-residue polypeptide: Exodeoxyribonuclease 7 small subunit (83 aa).

The protein belongs to the XseB family. As to quaternary structure, heterooligomer composed of large and small subunits.

The protein localises to the cytoplasm. It catalyses the reaction Exonucleolytic cleavage in either 5'- to 3'- or 3'- to 5'-direction to yield nucleoside 5'-phosphates.. Functionally, bidirectionally degrades single-stranded DNA into large acid-insoluble oligonucleotides, which are then degraded further into small acid-soluble oligonucleotides. This Bradyrhizobium sp. (strain BTAi1 / ATCC BAA-1182) protein is Exodeoxyribonuclease 7 small subunit.